A 177-amino-acid chain; its full sequence is MKLPKEGDFITIQSYKHDGSLHRTWRDTMVLKTTENALIGVNDHTLVTENDGRRWVTREPAIVYFHKKYWFNIIAMIRDNGVSYYCNLASPYVLDGEALKYIDYDLDVKVFSDGEKRLLDVDEYEVHKVKMAYPSDIDYILKENVKVLVDWIKHKKGPFSEAYIKIWYKRYLELKNR.

The active-site Proton donor is Arg23. Mg(2+)-binding residues include Asn87, Asp103, Asp105, Asp107, Asp120, and Glu123.

It belongs to the Ntdp family. Mg(2+) serves as cofactor.

It catalyses the reaction a ribonucleoside 5'-triphosphate + H2O = a ribonucleoside 5'-diphosphate + phosphate + H(+). It carries out the reaction a ribonucleoside 5'-diphosphate + H2O = a ribonucleoside 5'-phosphate + phosphate + H(+). Has nucleoside phosphatase activity towards nucleoside triphosphates and nucleoside diphosphates. The polypeptide is Nucleoside triphosphate/diphosphate phosphatase (Streptococcus uberis (strain ATCC BAA-854 / 0140J)).